Consider the following 355-residue polypeptide: CRAL-TRIO domain-containing protein C365.01 (355 aa).

In terms of domain architecture, CRAL-TRIO spans 93-260 (ENGLNQNFVK…SMHGQFDETK (168 aa)).

The sequence is that of CRAL-TRIO domain-containing protein C365.01 from Schizosaccharomyces pombe (strain 972 / ATCC 24843) (Fission yeast).